The chain runs to 383 residues: Smad nuclear-interacting protein 1 (383 aa).

Basic and acidic residues predominate over residues 1–10 (MKAGKSERER). The segment at 1-209 (MKAGKSERER…NRSKEVPVKE (209 aa)) is disordered. At Ser-18 the chain carries Phosphoserine. Lys-28 is covalently cross-linked (Glycyl lysine isopeptide (Lys-Gly) (interchain with G-Cter in SUMO); alternate). Lys-28 participates in a covalent cross-link: Glycyl lysine isopeptide (Lys-Gly) (interchain with G-Cter in SUMO1); alternate. Lys-28 participates in a covalent cross-link: Glycyl lysine isopeptide (Lys-Gly) (interchain with G-Cter in SUMO2); alternate. Residues 28 to 43 (KQERLSPEPVAHRRPD) show a composition bias toward basic and acidic residues. Ser-33, Ser-48, and Ser-50 each carry phosphoserine. The segment covering 44–56 (APAASLSPPAAEP) has biased composition (low complexity). The segment covering 59–90 (SGHRGSRARSPAKKKSKSSGRRSKSPRTKRSQ) has biased composition (basic residues). Ser-91 is subject to Phosphoserine. Basic and acidic residues-rich tracts occupy residues 99-134 (VKQE…ERDR) and 143-159 (RSSD…DRDS). Lys-100 is covalently cross-linked (Glycyl lysine isopeptide (Lys-Gly) (interchain with G-Cter in SUMO2)). Phosphoserine is present on Ser-145. Positions 153-194 (QDRDRDSQNLQAQEEERDFHNARRREHRQQNESAGSEAQEVI) form a coiled coil. Lys-210 participates in a covalent cross-link: Glycyl lysine isopeptide (Lys-Gly) (interchain with G-Cter in SUMO2). Positions 268-331 (YLLGRHRRIA…NGTFLNNKRI (64 aa)) constitute an FHA domain. A compositionally biased stretch (basic and acidic residues) spans 359–369 (ESSDTSELDRK). The segment at 359 to 383 (ESSDTSELDRKEDEDDEEEEMVSDS) is disordered. Residues 370–383 (EDEDDEEEEMVSDS) are compositionally biased toward acidic residues. A Phosphoserine modification is found at Ser-381.

In terms of assembly, component of activated spliceosome complexes. Binds SMAD4 and CREBBP/EP300. Component of the minor spliceosome, which splices U12-type introns. Binds the SMAD1/OAZ1/PSMB4 complex. Interacts with DROSHA and SMARCA4. Component of the SNARP complex which consists at least of SNIP1, SNW1, THRAP3, BCLAF1 and PNN. In terms of processing, degraded by the proteasome upon binding to the SMAD1/OAZ1/PSMB4 complex.

Its subcellular location is the nucleus. Its function is as follows. Required for pre-mRNA splicing as component of the spliceosome. As a component of the minor spliceosome, involved in the splicing of U12-type introns in pre-mRNAs. Down-regulates NF-kappa-B signaling by competing with RELA for CREBBP/EP300 binding. Involved in the microRNA (miRNA) biogenesis. May be involved in cyclin-D1/CCND1 mRNA stability through the SNARP complex which associates with both the 3'end of the CCND1 gene and its mRNA. The sequence is that of Smad nuclear-interacting protein 1 (Snip1) from Mus musculus (Mouse).